Here is a 367-residue protein sequence, read N- to C-terminus: THO complex subunit 6 (367 aa).

7 WD repeats span residues 23–67 (IETR…SQSA), 88–129 (AHEG…ESDV), 157–196 (SPMP…IKMT), 199–240 (GHSD…KVIG), 243–283 (DKKS…CVQT), 285–322 (PIPA…LSQI), and 324–363 (CAPC…CTFR).

Belongs to the WD repeat THOC6 family. Component of the THO complex, which is composed of THO1, THO2, THO3, THO5, THO6 and THO7. Interacts with ABI5, DDB1A and DWA2.

It localises to the nucleus. It participates in protein modification; protein ubiquitination. Acts as a component of the THO subcomplex of the TREX complex which is thought to couple mRNA transcription, processing and nuclear export. In terms of biological role, component of the CUL4-RBX1-DDB1-DWA1/DWA2 E3 ubiquitin-protein ligase complex that acts as a negative regulator in abscisic acid (ABA) signaling. May function as the substrate recognition module within this complex leading to ABI5 degradation. Functionally redundant with DWA2. This is THO complex subunit 6 (THO6) from Arabidopsis thaliana (Mouse-ear cress).